The primary structure comprises 580 residues: High affinity choline transporter 1 (580 aa).

The Extracellular segment spans residues 1–6 (MPFHVE). Residues 7–27 (GLVAIILFYLLIFLVGIWAAW) form a helical membrane-spanning segment. Over 28–48 (KTKNSGNAEERSEAIIVGGRD) the chain is Cytoplasmic. Residues 49–69 (IGLLVGGFTMTATWVGGGYIN) form a helical membrane-spanning segment. Over 70-81 (GTAEAVYGPGCG) the chain is Extracellular. The helical transmembrane segment at 82–102 (LAWAQAPIGYSLSLILGGLFF) threads the bilayer. Topologically, residues 103 to 125 (AKPMRSKGYVTMLDPFQQIYGKR) are cytoplasmic. The chain crosses the membrane as a helical span at residues 126-146 (MGGLLFIPALMGEMFWAAAIF). The Extracellular portion of the chain corresponds to 147–164 (SALGATISVIIDVDVNIS). The helical transmembrane segment at 165 to 185 (VIVSALIAILYTLVGGLYSVA) threads the bilayer. The Cytoplasmic portion of the chain corresponds to 186 to 191 (YTDVVQ). The chain crosses the membrane as a helical span at residues 192-212 (LFCIFIGLWISVPFALSHPAV). The Extracellular segment spans residues 213–237 (TDIGFTAVHAKYQSPWLGTIESVEV). Residues 238–258 (YTWLDNFLLLMLGGIPWQAYF) traverse the membrane as a helical segment. At 259-274 (QRVLSSSSATYAQVLS) the chain is on the cytoplasmic side. The chain crosses the membrane as a helical span at residues 275-295 (FLAAFGCLVMALPAICIGAIG). Residues 296–317 (ASTDWNQTAYGFPDPKTKEEAD) lie on the Extracellular side of the membrane. N-linked (GlcNAc...) asparagine glycosylation occurs at Asn301. A helical transmembrane segment spans residues 318–338 (MILPIVLQYLCPVYISFFGLG). At 339-376 (AVSAAVMSSADSSILSASSMFARNIYQLSFRQNASDKE) the chain is on the cytoplasmic side. A helical membrane pass occupies residues 377-397 (IVWVMRITVFVFGASATAMAL). The Extracellular segment spans residues 398–406 (LTKTVYGLW). A helical membrane pass occupies residues 407 to 427 (YLSSDLVYIIIFPQLLCVLFI). Topologically, residues 428-435 (KGTNTYGA) are cytoplasmic. Residues 436 to 456 (VAGYIFGLFLRITGGEPYLYL) form a helical membrane-spanning segment. Residues 457-481 (QPLIFYPGYYPDKNGIYNQRFPFKT) lie on the Extracellular side of the membrane. A helical membrane pass occupies residues 482–502 (LSMVTSFFTNICVSYLAKYLF). The interval 502–580 (FESGTLPPKL…EGSGTEDNLQ (79 aa)) is mediates interaction with SEC14L1. The Cytoplasmic portion of the chain corresponds to 503-580 (ESGTLPPKLD…EGSGTEDNLQ (78 aa)). The short motif at 527 to 532 (DKTILV) is the Dileucine-like motif element.

This sequence belongs to the sodium:solute symporter (SSF) (TC 2.A.21) family. Homooligomerizes at cell surface. Interacts with SEC14L1; may regulate SLC5A7. In terms of processing, phosphorylated. As to expression, expressed in basal forebrain, brain stem, spinal chord, and striatum. Specific for cholinergic neurons.

The protein resides in the presynaptic cell membrane. The protein localises to the cell projection. It localises to the axon. Its subcellular location is the early endosome membrane. It is found in the cytoplasmic vesicle. The protein resides in the secretory vesicle. The protein localises to the synaptic vesicle membrane. It catalyses the reaction choline(out) + n Na(+)(out) = choline(in) + n Na(+)(in). Choline uptake activity is regulated by SLC5A7/CHT1 internalization (inactive form) from the cell surface and recycling of internalized SLC5A7/CHT1 into the cell surface (active form). Activated by extracellular chloride ion. Specifically inhibited by nanomolar concentrations of hemicholinium 3. Its function is as follows. High-affinity Na(+)-coupled choline transmembrane symporter. Functions as an electrogenic, voltage-dependent transporter with variable charge/choline stoichiometry. Choline uptake and choline-induced current is also Cl(-)-dependent where Cl(-) is likely a regulatory ion rather than cotransported ion. Plays a critical role in acetylcholine (ACh) synthesis by taking up the substrate choline from the synaptic cleft into the presynaptic nerve terminals after neurotransmitter release. SLC5A7/CHT1-mediated choline high-affinity transport in cholinergic neurons is the rate-limiting step for production of ACh, thereby facilitating communication by subsequent action potentials. Localized predominantly in presynaptic terminal intracellular organelles, and translocated to the plasma membrane in active form in response to neuronal activity. This is High affinity choline transporter 1 from Rattus norvegicus (Rat).